We begin with the raw amino-acid sequence, 239 residues long: Ribosomal RNA small subunit methyltransferase G (239 aa).

Residues Gly-79, Phe-84, 130 to 131, and Arg-149 contribute to the S-adenosyl-L-methionine site; that span reads AE. The disordered stretch occupies residues 218–239; sequence KKTKTPKKYPRQAGTPSKKPIS.

Belongs to the methyltransferase superfamily. RNA methyltransferase RsmG family.

It is found in the cytoplasm. Specifically methylates the N7 position of a guanine in 16S rRNA. This is Ribosomal RNA small subunit methyltransferase G from Leuconostoc mesenteroides subsp. mesenteroides (strain ATCC 8293 / DSM 20343 / BCRC 11652 / CCM 1803 / JCM 6124 / NCDO 523 / NBRC 100496 / NCIMB 8023 / NCTC 12954 / NRRL B-1118 / 37Y).